The following is a 386-amino-acid chain: Mannitol-1-phosphate 5-dehydrogenase (386 aa).

3–14 (AVHFGAGNIGRG) is an NAD(+) binding site.

It belongs to the mannitol dehydrogenase family.

The catalysed reaction is D-mannitol 1-phosphate + NAD(+) = beta-D-fructose 6-phosphate + NADH + H(+). The protein is Mannitol-1-phosphate 5-dehydrogenase of Brevibacillus brevis (strain 47 / JCM 6285 / NBRC 100599).